The sequence spans 238 residues: Large ribosomal subunit protein uL3 (238 aa).

N5-methylglutamine is present on Q157.

It belongs to the universal ribosomal protein uL3 family. Part of the 50S ribosomal subunit. Forms a cluster with proteins L14 and L19. In terms of processing, methylated by PrmB.

Its function is as follows. One of the primary rRNA binding proteins, it binds directly near the 3'-end of the 23S rRNA, where it nucleates assembly of the 50S subunit. This Ruthia magnifica subsp. Calyptogena magnifica protein is Large ribosomal subunit protein uL3.